Consider the following 304-residue polypeptide: Endonuclease III-like protein 1 (304 aa).

A mitochondrion-targeting transit peptide spans 1–22 (MTALSARMLTRSRSLGPGAGPR). The segment at 1 to 72 (MTALSARMLT…SDSEKGEGAE (72 aa)) is disordered. Over residues 23–42 (GCREEPGPLRRREAAAEARK) the composition is skewed to basic and acidic residues. Positions 28–52 (PGPLRRREAAAEARKSHSPVKRPRK) match the Bipartite nuclear localization signal motif. Basic residues predominate over residues 43 to 55 (SHSPVKRPRKAQR). Residues Ser-63 and Ser-65 each carry the phosphoserine modification. The region spanning 191 to 215 (HYGGDIPASVAELVALPGVGPKMAH) is the HhH domain. Residue Lys-212 is the Nucleophile; for N-glycosylase activity of the active site. Residues Cys-282, Cys-289, Cys-292, and Cys-298 each contribute to the [4Fe-4S] cluster site.

It belongs to the Nth/MutY family. In terms of assembly, interacts with YBX1. Interacts with ERCC5/XPG; the interaction stimulates NTHL1 activity and NTHL1 binding to its DNA substrate. [4Fe-4S] cluster serves as cofactor. Ubiquitinated by TRIM26; leading to proteasomal degradation. As to expression, widely expressed with highest levels in heart and lowest levels in lung and liver.

It localises to the nucleus. It is found in the mitochondrion. The enzyme catalyses 2'-deoxyribonucleotide-(2'-deoxyribose 5'-phosphate)-2'-deoxyribonucleotide-DNA = a 3'-end 2'-deoxyribonucleotide-(2,3-dehydro-2,3-deoxyribose 5'-phosphate)-DNA + a 5'-end 5'-phospho-2'-deoxyribonucleoside-DNA + H(+). APE1 displaces NTHL1 from the N-glycosylase-generated AP site in DNA, thereby increasing the turnover of the DNA N-glycosylase activity. AP lyase activity is stimulated by YBX1. ERCC5/XPG stimulates NTHL1 activity and NTHL1 binding to its DNA substrate. Its function is as follows. Bifunctional DNA N-glycosylase with associated apurinic/apyrimidinic (AP) lyase function that catalyzes the first step in base excision repair (BER), the primary repair pathway for the repair of oxidative DNA damage. The DNA N-glycosylase activity releases the damaged DNA base from DNA by cleaving the N-glycosidic bond, leaving an AP site. The AP-lyase activity cleaves the phosphodiester bond 3' to the AP site by a beta-elimination. Primarily recognizes and repairs oxidative base damage of pyrimidines. Also has 8-oxo-7,8-dihydroguanine (8-oxoG) DNA glycosylase activity. Acts preferentially on DNA damage opposite guanine residues in DNA. Is able to process lesions in nucleosomes without requiring or inducing nucleosome disruption. This Homo sapiens (Human) protein is Endonuclease III-like protein 1.